The primary structure comprises 260 residues: Voltage-dependent calcium channel gamma-6 subunit (260 aa).

The interval Arg14–Pro33 is disordered. The segment covering Arg15–Gly25 has biased composition (basic residues). 4 consecutive transmembrane segments (helical) span residues Leu43 to Val63, Val143 to Leu163, Phe169 to Leu189, and Leu221 to Leu241.

It belongs to the PMP-22/EMP/MP20 family. CACNG subfamily. In terms of assembly, interacts with CACNA1C. Identified in a complex with the L-type calcium channel subunits CACNA1C, CACNA2D1 and either CACNB1 or CACNB2. As to expression, detected in heart left ventricle.

Its subcellular location is the cell membrane. Functionally, regulates the activity of L-type calcium channels that contain CACNA1C as pore-forming subunit. The polypeptide is Voltage-dependent calcium channel gamma-6 subunit (CACNG6) (Homo sapiens (Human)).